The primary structure comprises 376 residues: Chaperone protein DnaJ (376 aa).

The region spanning 5-70 (DYYEILGVSK…QKRAAYDQYG (66 aa)) is the J domain. A CR-type zinc finger spans residues 131 to 209 (GVTKEIRIPT…CHGHGRVERS (79 aa)). Zn(2+) contacts are provided by Cys-144, Cys-147, Cys-161, Cys-164, Cys-183, Cys-186, Cys-197, and Cys-200. CXXCXGXG motif repeat units lie at residues 144 to 151 (CDVCHGSG), 161 to 168 (CPTCHGSG), 183 to 190 (CPHCQGRG), and 197 to 204 (CNKCHGHG).

It belongs to the DnaJ family. As to quaternary structure, homodimer. Requires Zn(2+) as cofactor.

The protein resides in the cytoplasm. Functionally, participates actively in the response to hyperosmotic and heat shock by preventing the aggregation of stress-denatured proteins and by disaggregating proteins, also in an autonomous, DnaK-independent fashion. Unfolded proteins bind initially to DnaJ; upon interaction with the DnaJ-bound protein, DnaK hydrolyzes its bound ATP, resulting in the formation of a stable complex. GrpE releases ADP from DnaK; ATP binding to DnaK triggers the release of the substrate protein, thus completing the reaction cycle. Several rounds of ATP-dependent interactions between DnaJ, DnaK and GrpE are required for fully efficient folding. Also involved, together with DnaK and GrpE, in the DNA replication of plasmids through activation of initiation proteins. The protein is Chaperone protein DnaJ of Escherichia coli (strain K12 / DH10B).